Here is a 392-residue protein sequence, read N- to C-terminus: Protein O-glucosyltransferase 1 (392 aa).

Residues 1-23 form the signal peptide; sequence MELGVSSQLWLWLLLLLLPPVPG. 4 disulfide bridges follow: C49–C56, C54–C357, C102–C108, and C263–C286. N53 carries an N-linked (GlcNAc...) asparagine glycan. The tract at residues 103-107 is interaction with the consensus sequence C-X-S-X-[PA]-C in peptide substrates; that stretch reads MFPSR. The active-site Proton donor/acceptor is D133. An interaction with the consensus sequence C-X-S-X-[PA]-C in peptide substrates region spans residues 172–178; sequence AVWPIYP. Y177 contacts UDP-alpha-D-glucose. N204 carries N-linked (GlcNAc...) asparagine glycosylation. UDP-alpha-D-glucose contacts are provided by residues S212, R218, and 274–279; that span reads VAASFR. N-linked (GlcNAc...) asparagine glycosylation is present at N373. Residues 389–392 carry the Prevents secretion from ER motif; that stretch reads KIEL.

The protein belongs to the glycosyltransferase 90 family.

It is found in the endoplasmic reticulum lumen. It carries out the reaction L-seryl-[EGF-like domain protein] + UDP-alpha-D-xylose = 3-O-(beta-D-xylosyl)-L-seryl-[EGF-like domain protein] + UDP + H(+). It catalyses the reaction L-seryl-[EGF-like domain protein] + UDP-alpha-D-glucose = 3-O-(beta-D-glucosyl)-L-seryl-[EGF-like domain protein] + UDP + H(+). Its pathway is protein modification; protein glycosylation. In terms of biological role, dual specificity glycosyltransferase that catalyzes the transfer of glucose and xylose from UDP-glucose and UDP-xylose, respectively, to a serine residue found in the consensus sequence of C-X-S-X-P-C. Specifically targets extracellular EGF repeats of protein such as CRB2, F7, F9 and NOTCH2. Acts as a positive regulator of Notch signaling by mediating O-glucosylation of Notch, leading to regulate muscle development. Notch glucosylation does not affect Notch ligand binding. Required during early development to promote gastrulation: acts by mediating O-glucosylation of CRB2, which is required for CRB2 localization to the cell membrane. The sequence is that of Protein O-glucosyltransferase 1 (POGLUT1) from Bos taurus (Bovine).